A 500-amino-acid polypeptide reads, in one-letter code: Lysine--tRNA ligase (500 aa).

The Mg(2+) site is built by glutamate 410 and glutamate 417.

The protein belongs to the class-II aminoacyl-tRNA synthetase family. In terms of assembly, homodimer. It depends on Mg(2+) as a cofactor.

It localises to the cytoplasm. The enzyme catalyses tRNA(Lys) + L-lysine + ATP = L-lysyl-tRNA(Lys) + AMP + diphosphate. In Pseudomonas putida (strain ATCC 700007 / DSM 6899 / JCM 31910 / BCRC 17059 / LMG 24140 / F1), this protein is Lysine--tRNA ligase.